A 290-amino-acid chain; its full sequence is Light-independent protochlorophyllide reductase iron-sulfur ATP-binding protein (290 aa).

ATP contacts are provided by residues 34 to 39 and Lys-63; that span reads GIGKST. A Mg(2+)-binding site is contributed by Ser-38. Residues Cys-119 and Cys-153 each coordinate [4Fe-4S] cluster. Residues 204 to 205 and 228 to 230 contribute to the ATP site; these read NR and PDL.

This sequence belongs to the NifH/BchL/ChlL family. In terms of assembly, homodimer. Protochlorophyllide reductase is composed of three subunits; BchL, BchN and BchB. It depends on [4Fe-4S] cluster as a cofactor.

It carries out the reaction chlorophyllide a + oxidized 2[4Fe-4S]-[ferredoxin] + 2 ADP + 2 phosphate = protochlorophyllide a + reduced 2[4Fe-4S]-[ferredoxin] + 2 ATP + 2 H2O. The protein operates within porphyrin-containing compound metabolism; bacteriochlorophyll biosynthesis (light-independent). Functionally, component of the dark-operative protochlorophyllide reductase (DPOR) that uses Mg-ATP and reduced ferredoxin to reduce ring D of protochlorophyllide (Pchlide) to form chlorophyllide a (Chlide). This reaction is light-independent. The L component serves as a unique electron donor to the NB-component of the complex, and binds Mg-ATP. This chain is Light-independent protochlorophyllide reductase iron-sulfur ATP-binding protein, found in Rhodospirillum rubrum.